A 173-amino-acid chain; its full sequence is Nuclear transcription factor Y subunit B-8 (173 aa).

Residues Met1–Glu30 form a disordered region. Ala2 is modified (N-acetylalanine). Residues Leu35–Ser41 mediate DNA binding. Residues Val62–Val73 are subunit association domain (SAD). The interval Asp123–Asp173 is disordered. Positions Gln140–Gln163 are enriched in polar residues.

This sequence belongs to the NFYB/HAP3 subunit family. As to quaternary structure, heterotrimeric transcription factor composed of three components, NF-YA, NF-YB and NF-YC. NF-YB and NF-YC must interact and dimerize for NF-YA association and DNA binding. As to expression, expressed in flowers and mature rosettes.

It localises to the nucleus. In terms of biological role, component of the NF-Y/HAP transcription factor complex. The NF-Y complex stimulates the transcription of various genes by recognizing and binding to a CCAAT motif in promoters. The polypeptide is Nuclear transcription factor Y subunit B-8 (NFYB8) (Arabidopsis thaliana (Mouse-ear cress)).